The chain runs to 308 residues: MSFKDLHIISMKSFSRDMIDHVLNTAEMLEPIAKGKTKSDLLKGKILGVLFFEPSTRTRMSFETAMMRLGGDVLSLGSVDASSIAKGETLADTIRVVNGYANAIVLRHNKEGAAQLASEFSSVPILNAGDGAGHHPTQTFLDLYTIRRESHLDGLKIALAGDLKYGRTVHSLCYALSLYGAEITLVSPKELRLPADIIEDLRSRNIKLTEIEYIEDAIENVDVLYVTRIQKERFPDPAEYRKVANSLLISPELLEKAKPELKVMHPLPRTNEIDPRVDNTKHACYFKQSFYGVPIRMALLALVMGALE.

R57 and T58 together coordinate carbamoyl phosphate. K86 serves as a coordination point for L-aspartate. Carbamoyl phosphate-binding residues include R107, H135, and Q138. L-aspartate contacts are provided by R167 and R228. Residues L267 and P268 each contribute to the carbamoyl phosphate site.

This sequence belongs to the aspartate/ornithine carbamoyltransferase superfamily. ATCase family. Heterooligomer of catalytic and regulatory chains.

The catalysed reaction is carbamoyl phosphate + L-aspartate = N-carbamoyl-L-aspartate + phosphate + H(+). It participates in pyrimidine metabolism; UMP biosynthesis via de novo pathway; (S)-dihydroorotate from bicarbonate: step 2/3. Catalyzes the condensation of carbamoyl phosphate and aspartate to form carbamoyl aspartate and inorganic phosphate, the committed step in the de novo pyrimidine nucleotide biosynthesis pathway. The sequence is that of Aspartate carbamoyltransferase catalytic subunit from Methanococcoides burtonii (strain DSM 6242 / NBRC 107633 / OCM 468 / ACE-M).